Reading from the N-terminus, the 516-residue chain is GMP synthase [glutamine-hydrolyzing] (516 aa).

The region spanning 8-198 (KILILDFGSQ…VVNICGCDTL (191 aa)) is the Glutamine amidotransferase type-1 domain. Catalysis depends on Cys84, which acts as the Nucleophile. Active-site residues include His172 and Glu174. One can recognise a GMPS ATP-PPase domain in the interval 199–391 (WNIENIIEND…LGLPYNMLYR (193 aa)). Residue 226 to 232 (SGGVDSS) coordinates ATP.

Homodimer.

It catalyses the reaction XMP + L-glutamine + ATP + H2O = GMP + L-glutamate + AMP + diphosphate + 2 H(+). It participates in purine metabolism; GMP biosynthesis; GMP from XMP (L-Gln route): step 1/1. In terms of biological role, catalyzes the synthesis of GMP from XMP. This is GMP synthase [glutamine-hydrolyzing] from Francisella tularensis subsp. tularensis (strain WY96-3418).